Reading from the N-terminus, the 306-residue chain is Ribosomal protein L11 methyltransferase (306 aa).

4 residues coordinate S-adenosyl-L-methionine: T152, G179, D201, and N243.

The protein belongs to the methyltransferase superfamily. PrmA family.

The protein resides in the cytoplasm. The enzyme catalyses L-lysyl-[protein] + 3 S-adenosyl-L-methionine = N(6),N(6),N(6)-trimethyl-L-lysyl-[protein] + 3 S-adenosyl-L-homocysteine + 3 H(+). In terms of biological role, methylates ribosomal protein L11. This chain is Ribosomal protein L11 methyltransferase, found in Geobacter sp. (strain M21).